The primary structure comprises 1342 residues: DNA-directed RNA polymerase subunit beta (1342 aa).

It belongs to the RNA polymerase beta chain family. In terms of assembly, the RNAP catalytic core consists of 2 alpha, 1 beta, 1 beta' and 1 omega subunit. When a sigma factor is associated with the core the holoenzyme is formed, which can initiate transcription.

The catalysed reaction is RNA(n) + a ribonucleoside 5'-triphosphate = RNA(n+1) + diphosphate. Its function is as follows. DNA-dependent RNA polymerase catalyzes the transcription of DNA into RNA using the four ribonucleoside triphosphates as substrates. In Salmonella choleraesuis (strain SC-B67), this protein is DNA-directed RNA polymerase subunit beta.